A 117-amino-acid polypeptide reads, in one-letter code: Large ribosomal subunit protein uL24 (117 aa).

Belongs to the universal ribosomal protein uL24 family. Part of the 50S ribosomal subunit.

Functionally, one of two assembly initiator proteins, it binds directly to the 5'-end of the 23S rRNA, where it nucleates assembly of the 50S subunit. One of the proteins that surrounds the polypeptide exit tunnel on the outside of the subunit. This Nostoc punctiforme (strain ATCC 29133 / PCC 73102) protein is Large ribosomal subunit protein uL24.